A 457-amino-acid chain; its full sequence is MKKMASFSLTTLLKNLGKHHKFLVAFSGGLDSTVLLHGLLSLRDQNHLKLNIRAIHTHEKLIHRPENWSKDADQRLTHCQSQCEQWKVPLEVVKMEVEPRGKGIEAAARTVRYQIFSNALKKDEVLLTGHHQNDQCETVLLALKRGSGPAGLSGMPLAMPLGQSQLLRPQLSFSRHSLQLYALEKGILWMEDEDNQNDRFDRNFLRRHILPLLTARWPHFLESTSRSAALCAEQETLLDELLSEQLCQLQSQEGTLSIQGLAACSEVKRNALLRRWLDSKKVPMPSRDQLARLWKEVALAKSDAQPYLQCGEYQIRRFREHLYLFKSSKKSQPCPALFSIKWPFTPESENKLVLPDHLGELKCTPYRSEGQVIRAPQKNEVISIRFGLTGNIKILGRDRSRHSKKLWQELGIPPWERKRIPLLYFNETLIAAAEVFVTQKGEAKQGEPHCYLEWVKS.

27–32 (SGGLDS) lines the ATP pocket.

It belongs to the tRNA(Ile)-lysidine synthase family.

The protein resides in the cytoplasm. The catalysed reaction is cytidine(34) in tRNA(Ile2) + L-lysine + ATP = lysidine(34) in tRNA(Ile2) + AMP + diphosphate + H(+). Its function is as follows. Ligates lysine onto the cytidine present at position 34 of the AUA codon-specific tRNA(Ile) that contains the anticodon CAU, in an ATP-dependent manner. Cytidine is converted to lysidine, thus changing the amino acid specificity of the tRNA from methionine to isoleucine. The chain is tRNA(Ile)-lysidine synthase from Hamiltonella defensa subsp. Acyrthosiphon pisum (strain 5AT).